The sequence spans 444 residues: Deoxyguanosinetriphosphate triphosphohydrolase-like protein (444 aa).

The interval methionine 1–glutamine 26 is disordered. One can recognise an HD domain in the interval arginine 59 to alanine 250.

The protein belongs to the dGTPase family. Type 2 subfamily.

This Shewanella sediminis (strain HAW-EB3) protein is Deoxyguanosinetriphosphate triphosphohydrolase-like protein.